We begin with the raw amino-acid sequence, 288 residues long: Diaminopimelate epimerase (288 aa).

Asn-13, Gln-46, and Asn-66 together coordinate substrate. Cys-75 serves as the catalytic Proton donor. Substrate contacts are provided by residues 76-77 (GN), Asn-166, Asn-199, and 217-218 (ER). The Proton acceptor role is filled by Cys-226. 227–228 (GT) provides a ligand contact to substrate.

This sequence belongs to the diaminopimelate epimerase family. In terms of assembly, homodimer.

Its subcellular location is the cytoplasm. It catalyses the reaction (2S,6S)-2,6-diaminopimelate = meso-2,6-diaminopimelate. Its pathway is amino-acid biosynthesis; L-lysine biosynthesis via DAP pathway; DL-2,6-diaminopimelate from LL-2,6-diaminopimelate: step 1/1. Functionally, catalyzes the stereoinversion of LL-2,6-diaminopimelate (L,L-DAP) to meso-diaminopimelate (meso-DAP), a precursor of L-lysine and an essential component of the bacterial peptidoglycan. This is Diaminopimelate epimerase from Cupriavidus taiwanensis (strain DSM 17343 / BCRC 17206 / CCUG 44338 / CIP 107171 / LMG 19424 / R1) (Ralstonia taiwanensis (strain LMG 19424)).